The chain runs to 450 residues: Protein tailless (450 aa).

The segment at residues 31 to 108 is a DNA-binding region (nuclear receptor); sequence HVPCKVCRDH…VGMNKDAVQH (78 aa). 2 NR C4-type zinc fingers span residues 34 to 54 and 70 to 96; these read CKVCRDHSSGKHYGIYACDGC and CKSQKQGLCVVDKTHRNQCRACRLRKC. The NR LBD domain occupies 187-448; that stretch reads VPRVPHHPVH…RLISDMYSQR (262 aa).

It belongs to the nuclear hormone receptor family. NR2 subfamily. Monomer.

The protein localises to the nucleus. In terms of biological role, orphan receptor that binds DNA as a monomer to hormone response elements (HRE) containing an extended core motif half-site sequence 5'-AAGTCA-3' in which the 5' flanking nucleotides participate in determining receptor specificity. This receptor binds to the consensus sequence [AG][AG]AAGTCAA. Plays a key role in the establishment of non-metameric domains at the anterior and posterior poles of the embryo. It may also play a role in the nervous system. The maternal terminal pathway activates the tll gene in the termini; TLL activity then represses segmentation and activates terminal-specific genes in these domains. Involved in the regulation of early eye development. In the embryonic visual system anlage drives cells to optic lobe as opposed to Bolwig's organ fate. The chain is Protein tailless (tll) from Drosophila virilis (Fruit fly).